The sequence spans 158 residues: C-type lectin BfL-1 (158 aa).

An N-terminal signal peptide occupies residues 1–21; that stretch reads MGHFTFIGLCLLAMFLSLSGA. 4 cysteine pairs are disulfide-bonded: Cys26-Cys37, Cys54-Cys154, Cys61-Cys156, and Cys129-Cys146. Residues 33–155 form the C-type lectin domain; sequence KNGLCYKVFS…CAALRPFLCQ (123 aa). Residues Gln119, Asp121, and Glu127 each coordinate Ca(2+). Residues 119-121 carry the Galactose-binding motif; the sequence is QPD. N-linked (GlcNAc...) asparagine glycosylation is present at Asn134. Residues Asn142 and Asp143 each coordinate Ca(2+).

The protein belongs to the true venom lectin family. Homodimer; non-covalently linked. In terms of tissue distribution, expressed by the venom gland.

The protein localises to the secreted. Functionally, galactose-binding lectin which recognizes specific carbohydrate structures and agglutinates a variety of animal cells by binding to cell-surface glycoproteins and glycolipids. May be a calcium-dependent lectin. This Bungarus fasciatus (Banded krait) protein is C-type lectin BfL-1.